Consider the following 60-residue polypeptide: Large ribosomal subunit protein uL30 (60 aa).

Belongs to the universal ribosomal protein uL30 family. As to quaternary structure, part of the 50S ribosomal subunit.

This is Large ribosomal subunit protein uL30 from Streptococcus thermophilus (strain CNRZ 1066).